A 285-amino-acid chain; its full sequence is Bifunctional protein FolD (285 aa).

Residues 165 to 167 (GRS), Ser-190, and Ile-231 each bind NADP(+).

It belongs to the tetrahydrofolate dehydrogenase/cyclohydrolase family. As to quaternary structure, homodimer.

It catalyses the reaction (6R)-5,10-methylene-5,6,7,8-tetrahydrofolate + NADP(+) = (6R)-5,10-methenyltetrahydrofolate + NADPH. It carries out the reaction (6R)-5,10-methenyltetrahydrofolate + H2O = (6R)-10-formyltetrahydrofolate + H(+). Its pathway is one-carbon metabolism; tetrahydrofolate interconversion. Catalyzes the oxidation of 5,10-methylenetetrahydrofolate to 5,10-methenyltetrahydrofolate and then the hydrolysis of 5,10-methenyltetrahydrofolate to 10-formyltetrahydrofolate. This is Bifunctional protein FolD from Alkaliphilus oremlandii (strain OhILAs) (Clostridium oremlandii (strain OhILAs)).